Here is a 111-residue protein sequence, read N- to C-terminus: Nucleoid-associated protein NMA1657 (111 aa).

It belongs to the YbaB/EbfC family. As to quaternary structure, homodimer.

It localises to the cytoplasm. The protein localises to the nucleoid. Functionally, binds to DNA and alters its conformation. May be involved in regulation of gene expression, nucleoid organization and DNA protection. The sequence is that of Nucleoid-associated protein NMA1657 from Neisseria meningitidis serogroup A / serotype 4A (strain DSM 15465 / Z2491).